Here is a 318-residue protein sequence, read N- to C-terminus: Fe(3+) dicitrate transport system permease protein FecD (318 aa).

The Cytoplasmic portion of the chain corresponds to Met1–Lys2. A helical membrane pass occupies residues Ile3–Met23. Over Gly24 to Leu55 the chain is Periplasmic. Residues Leu56–Val76 form a helical membrane-spanning segment. Over Arg77–Ser105 the chain is Cytoplasmic. A helical membrane pass occupies residues Leu106–Leu126. Topologically, residues Lys127–Lys137 are periplasmic. A helical membrane pass occupies residues Leu138–Leu158. Residues Ser159–Asp179 are Cytoplasmic-facing. Residues Trp180–Phe200 traverse the membrane as a helical segment. Topologically, residues Cys201–Arg225 are periplasmic. A helical transmembrane segment spans residues Phe226–Ile246. Residues Ser247 to Leu269 lie on the Cytoplasmic side of the membrane. A helical transmembrane segment spans residues Pro270–Ile290. The Periplasmic portion of the chain corresponds to His291–Leu294. The chain crosses the membrane as a helical span at residues Glu295–Val315. The Cytoplasmic portion of the chain corresponds to Arg316–Arg318.

It belongs to the binding-protein-dependent transport system permease family. FecCD subfamily. In terms of assembly, the complex is composed of two ATP-binding proteins (FecE), two transmembrane proteins (FecC and FecD) and a solute-binding protein (FecB). Interacts with FecB.

Its subcellular location is the cell inner membrane. Part of the ABC transporter complex FecBCDE involved in citrate-dependent Fe(3+) uptake. Probably responsible for the translocation of the substrate across the membrane. This chain is Fe(3+) dicitrate transport system permease protein FecD, found in Escherichia coli (strain K12).